The primary structure comprises 612 residues: UvrABC system protein C (612 aa).

Residues 21 to 99 (HQPGVYRMYD…IKKYRPRYNV (79 aa)) form the GIY-YIG domain. The UVR domain maps to 208–243 (QQVIDELMNKMEQASTDLDFERAARFRDQIAALRKT).

This sequence belongs to the UvrC family. In terms of assembly, interacts with UvrB in an incision complex.

It is found in the cytoplasm. Its function is as follows. The UvrABC repair system catalyzes the recognition and processing of DNA lesions. UvrC both incises the 5' and 3' sides of the lesion. The N-terminal half is responsible for the 3' incision and the C-terminal half is responsible for the 5' incision. The protein is UvrABC system protein C of Idiomarina loihiensis (strain ATCC BAA-735 / DSM 15497 / L2-TR).